A 316-amino-acid polypeptide reads, in one-letter code: D-alanine--D-alanine ligase (316 aa).

The 188-residue stretch at 129–316 (KYILQAAGIP…ALQAEFCRYP (188 aa)) folds into the ATP-grasp domain. An ATP-binding site is contributed by 162-217 (EGSLLYPMFIKPANMGSSVGITKAENREELQNALQEAYRYDTRAIVEQGIEAREIE). Residues D288, E301, and N303 each contribute to the Mg(2+) site.

This sequence belongs to the D-alanine--D-alanine ligase family. Requires Mg(2+) as cofactor. Mn(2+) is required as a cofactor.

The protein resides in the cytoplasm. It carries out the reaction 2 D-alanine + ATP = D-alanyl-D-alanine + ADP + phosphate + H(+). The protein operates within cell wall biogenesis; peptidoglycan biosynthesis. In terms of biological role, cell wall formation. In Enterococcus gallinarum, this protein is D-alanine--D-alanine ligase (ddl).